Consider the following 2329-residue polypeptide: Pre-mRNA-splicing factor 8 homolog (2329 aa).

Residues 1–53 are disordered; the sequence is MANYGGHPQTEPHAIPDSILEEKSRKWKQLQGKRYSEKKKFGMSDTQKEEMPP. Residues 34-53 show a composition bias toward basic and acidic residues; sequence RYSEKKKFGMSDTQKEEMPP. A reverse transcriptase homology domain region spans residues 804–1295; it reads TTVHWLESRR…KIQTRIKIGL (492 aa). The segment at 1296–1570 is linker; sequence NSKMPSRFPP…TLKISLIQIF (275 aa). Residues 1506–1519 are important for branch point selection; the sequence is MKFKKLTNAQRSGL. The restriction endonuclease homology domain stretch occupies residues 1574-1745; sequence LWQKIHESVV…LRERIRKGLQ (172 aa). An RNase H homology domain region spans residues 1760 to 2013; sequence NYGELFSNQI…ILGMEISAPS (254 aa). An MPN domain is found at 2096–2227; that stretch reads TYILPKNILK…LTAYKLTPSG (132 aa).

In terms of assembly, part of the U5 snRNP complex and of the U4/U6-U5 tri-snRNP complex.

It localises to the nucleus. In terms of biological role, functions as a scaffold that mediates the ordered assembly of spliceosomal proteins and snRNAs. Required for the assembly of the U4/U6-U5 tri-snRNP complex. Functions as a scaffold that positions spliceosomal U2, U5 and U6 snRNAs at splice sites on pre-mRNA substrates, so that splicing can occur. Interacts with both the 5' and the 3' splice site. In Caenorhabditis elegans, this protein is Pre-mRNA-splicing factor 8 homolog (prp-8).